We begin with the raw amino-acid sequence, 296 residues long: Myeloid differentiation primary response protein MyD88 (296 aa).

The 56-residue stretch at 54–109 (MGFEYLEIRELETRPDPTRSLLDAWQGRSGASVGRLLELLALLDREDILKELKSRI) folds into the Death domain. The intermediate domain stretch occupies residues 110 to 155 (EEDCQKYLGKQQNQESEKPLQVARVESSVPQTKELGGITTLDDPLG). Residues 159-293 (ELFDAFICYC…WFWTRLAKAL (135 aa)) enclose the TIR domain. A Phosphoserine modification is found at Ser-244.

As to quaternary structure, homodimer. Also forms heterodimers with TIRAP. Binds to TLR2, TLR4, IRAK1, IRAK2 and IRAK4 via their respective TIR domains. Interacts with IL18R1. Interacts with BMX, IL1RL1, IKBKE and IRF7. Interacts with LRRFIP1 and LRRFIP2; this interaction positively regulates Toll-like receptor (TLR) signaling in response to agonist. Interacts with FLII. LRRFIP1 and LRRFIP2 compete with FLII for MYD88-binding. Interacts with IRF1. Upon IL1B treatment, forms a complex with PELI1, IRAK1, IRAK4 and TRAF6; this complex recruits MAP3K7/TAK1, TAB1 and TAB2 to mediate NF-kappa-B activation. Direct binding of SMAD6 to PELI1 prevents the complex formation and hence negatively regulates IL1R-TLR signaling and eventually NF-kappa-B-mediated gene expression. May interact with PIK3AP1. Interacts (via TIR domain) with DHX9 (via H2A and OB-fold regions); this interaction is direct. Interacts with OTUD4 deubiquitinase; the interaction is direct. Post-translationally, ubiquitinated; undergoes 'Lys-63'-linked polyubiquitination. OTUD4 specifically hydrolyzes 'Lys-63'-linked polyubiquitinated MYD88. Deubiquitinated by USP3 that cleaves 'Lys-63'-linked ubiquitin chains leading to inhibition of MYD88-induced NF-kappa-B signaling. Detected in bone marrow. Isoform 1 is expressed in testis, kidney, lung, ovary, adrenal gland, provstate, thymus and heart, and weakly in skeletal muscle, liver, spleen and brain. Isoform 2 is mainly expressed in the spleen and weakly in brain.

The protein resides in the cytoplasm. It localises to the nucleus. In terms of biological role, adapter protein involved in the Toll-like receptor and IL-1 receptor signaling pathway in the innate immune response. Acts via IRAK1, IRAK2, IRF7 and TRAF6, leading to NF-kappa-B activation, cytokine secretion and the inflammatory response. Increases IL-8 transcription. Involved in IL-18-mediated signaling pathway. Activates IRF1 resulting in its rapid migration into the nucleus to mediate an efficient induction of IFN-beta, NOS2/INOS, and IL12A genes. Upon TLR8 activation by GU-rich single-stranded RNA (GU-rich RNA) derived from viruses, induces IL1B release through NLRP3 inflammasome activation. MyD88-mediated signaling in intestinal epithelial cells is crucial for maintenance of gut homeostasis and controls the expression of the antimicrobial lectin REG3G in the small intestine. Mediates leukocyte recruitment at the inflammatory site. Defective in its ability to induce IRAK phosphorylation and NF-kappa-B activation and can function as a negative regulator of activation by IL-1 or lipopolysaccharide (LPS). The polypeptide is Myeloid differentiation primary response protein MyD88 (Mus musculus (Mouse)).